A 145-amino-acid chain; its full sequence is Sperm mitochondrial-associated cysteine-rich protein (145 aa).

Phosphoserine is present on residues Ser38, Ser45, Ser113, and Ser131. Positions 105–145 are disordered; sequence CSSENKTESDSDGSGQTQDRGAQTQQSPQGGQGNWNQKKTK. A compositionally biased stretch (polar residues) spans 116–145; it reads DGSGQTQDRGAQTQQSPQGGQGNWNQKKTK.

As to expression, testis. Selectively expressed in the spermatids of seminiferous tubules and in flagella of epididymal sperm.

It localises to the cytoplasm. It is found in the mitochondrion membrane. Functionally, involved in sperm motility. Its absence is associated with genetic background dependent male infertility. Infertility may be due to reduced sperm motility in the female reproductive tract and inability to penetrate the oocyte zona pellucida. The sequence is that of Sperm mitochondrial-associated cysteine-rich protein (Smcp) from Rattus norvegicus (Rat).